We begin with the raw amino-acid sequence, 467 residues long: Glutamate--tRNA ligase (467 aa).

The 'HIGH' region motif lies at 15–25 (PSPTGYLHVGG). Residues 249–253 (KLSKR) carry the 'KMSKS' region motif. K252 is a binding site for ATP.

The protein belongs to the class-I aminoacyl-tRNA synthetase family. Glutamate--tRNA ligase type 1 subfamily. In terms of assembly, monomer.

It localises to the cytoplasm. It catalyses the reaction tRNA(Glu) + L-glutamate + ATP = L-glutamyl-tRNA(Glu) + AMP + diphosphate. Its function is as follows. Catalyzes the attachment of glutamate to tRNA(Glu) in a two-step reaction: glutamate is first activated by ATP to form Glu-AMP and then transferred to the acceptor end of tRNA(Glu). This chain is Glutamate--tRNA ligase, found in Coprothermobacter proteolyticus (strain ATCC 35245 / DSM 5265 / OCM 4 / BT).